Here is a 190-residue protein sequence, read N- to C-terminus: uncharacterized protein (190 aa).

This is an uncharacterized protein from Acanthamoeba polyphaga mimivirus (APMV).